The chain runs to 212 residues: Prolactin (212 aa).

The signal sequence occupies residues 1-24 (MAHRETNGSKLFITVLCMVAACSA). Disulfide bonds link Cys-70–Cys-185 and Cys-202–Cys-212.

It belongs to the somatotropin/prolactin family.

It is found in the secreted. The polypeptide is Prolactin (prl) (Sparus aurata (Gilthead sea bream)).